Here is a 93-residue protein sequence, read N- to C-terminus: UPF0369 protein RC0209 (93 aa).

Residues M1 to E24 are disordered. One can recognise an RPE1 insert domain in the interval R8–S55.

This sequence belongs to the SDHAF4 family.

The protein is UPF0369 protein RC0209 of Rickettsia conorii (strain ATCC VR-613 / Malish 7).